The chain runs to 595 residues: MHRYRSHTCAALRKSDVGSTVRLSGWVHRVRDHGGVLFIDLRDHYGMTQVVADPDSPAFKTAETVRGEWVIRVDGAVKARTDDTVNKNMPTGEVELYAREIEVLSAAKELPLPVFGEPDYPEDVRLKYRFLDLRRETLHKNIVRRTEIIAAMRRRMGDIGFTEYTTPILTASSPEGARDFLVPSRIHPGNFYALPQAPQQYKQLLMVAGFDRYFQIAPCFRDEDPRADRLPGEFYQLDLEMSFVEQEDVWDAMEPMIRAIFSDFAGGKPVTDKFPRIPYDTAIRKYGSDKPDLRNPIEMQEVTEHFAGSGFKVFANMIASNPKVEIWAIPAKTGGSRAFCDRMNAWAQSQGQPGLGYIFWRKEGEKLEGAGPLAKNIGEERTDAIRTQLGLEDGDACFFVAGEPAKFYKFAGEARTRAGEELNLVDRDRYELCWIVDFPFYEWNEEEKRVDFAHNPFSMPQGGLTALSSDDLLSIKAFQYDMVCNGFEIASGSIRNQSPELMVKAFENVGLSQADVEERFGGLYRAFQYGAPPHGGMAFGIDRIVMLLVGAKNLREISLFPMNQQAQDLLMGAPSQATPAQLRELSIRPIPQKKD.

E175 contributes to the L-aspartate binding site. The aspartate stretch occupies residues 199–202 (QQYK). The L-aspartate site is built by R221 and H454. Position 221–223 (221–223 (RDE)) interacts with ATP. E488 is a binding site for ATP. L-aspartate is bound at residue R495. 540 to 543 (GIDR) provides a ligand contact to ATP.

It belongs to the class-II aminoacyl-tRNA synthetase family. Type 1 subfamily. In terms of assembly, homodimer.

It localises to the cytoplasm. The catalysed reaction is tRNA(Asx) + L-aspartate + ATP = L-aspartyl-tRNA(Asx) + AMP + diphosphate. In terms of biological role, aspartyl-tRNA synthetase with relaxed tRNA specificity since it is able to aspartylate not only its cognate tRNA(Asp) but also tRNA(Asn). Reaction proceeds in two steps: L-aspartate is first activated by ATP to form Asp-AMP and then transferred to the acceptor end of tRNA(Asp/Asn). The sequence is that of Aspartate--tRNA(Asp/Asn) ligase from Rhizobium meliloti (strain 1021) (Ensifer meliloti).